The following is a 256-amino-acid chain: Chlorophyll a-b binding protein CP24 10B, chloroplastic (256 aa).

The N-terminal 45 residues, 1 to 45 (MTTTSATAVLNGLSSSFLTGGKKTQALLGAHVTARVTTPKRFVVA), are a transit peptide targeting the chloroplast. 2 helical membrane-spanning segments follow: residues 106 to 126 (WAMA…IPWF) and 134 to 154 (AIAP…MGWV).

It belongs to the ELIP/psbS family.

Its subcellular location is the plastid. The protein resides in the chloroplast thylakoid membrane. The polypeptide is Chlorophyll a-b binding protein CP24 10B, chloroplastic (CAP10B) (Solanum lycopersicum (Tomato)).